We begin with the raw amino-acid sequence, 585 residues long: Involucrin (585 aa).

Residues 1–15 (MSQQHTLPVTLSPAL) are compositionally biased toward polar residues. The tract at residues 1–132 (MSQQHTLPVT…LEEEKKLLDQ (132 aa)) is disordered. Residue Gln-79 is the site of Omega-hydroxyceramide glutamate ester attachment. Positions 92–115 (WEQHEEYQKAENPEQQLKQEKTQR) are enriched in basic and acidic residues. Omega-hydroxyceramide glutamate ester attachment occurs at residues Gln-118 and Gln-133. Positions 149–540 (KEQLLELPEQ…KDLEQQKGQL (392 aa)) are disordered. A run of 23 repeats spans residues 153 to 162 (LELPEQQEGH), 163 to 172 (LKHLEQQEGQ), 173 to 182 (LKHPEQQEGQ), 183 to 192 (LELPEQQEGQ), 193 to 202 (LELPEQQEGQ), 203 to 212 (LELPEQQEGQ), 213 to 222 (LELPEQQEGQ), 223 to 232 (LELPEQQEGQ), 233 to 242 (LELPQQQEGQ), 243 to 252 (LELSEQQEGQ), 253 to 262 (LELSEQQEGQ), 263 to 272 (LKHLEHQEGQ), 273 to 282 (LEVPEEQMGQ), 283 to 292 (LKYLEQQEGQ), 293 to 302 (LKHLDQQEKQ), 303 to 312 (PELPEQQMGQ), 313 to 322 (LKHLEQQEGQ), 323 to 332 (PKHLEQQEGQ), 333 to 342 (LEQLEEQEGQ), 343 to 352 (LKHLEQQEGQ), 353 to 362 (LEHLEHQEGQ), 363 to 372 (LGLPEQQVLQ), and 373 to 382 (LKQLEKQQGQ). Residues 153 to 542 (LELPEQQEGH…LEQQKGQLEQ (390 aa)) are 39 X 10 AA approximate tandem repeats of [LP]-[EKG]-[LHVYQEK]-[PLSQE]-[EQDV]-[QHEKRGA]-Q-[EMVQLP]-[GKLE]-[QHVNLD]. Over residues 159–178 (QEGHLKHLEQQEGQLKHPEQ) the composition is skewed to basic and acidic residues. Residues 179 to 261 (QEGQLELPEQ…QLELSEQQEG (83 aa)) show a composition bias toward low complexity. Positions 262-271 (QLKHLEHQEG) are enriched in basic and acidic residues. Basic and acidic residues-rich tracts occupy residues 292–304 (QLKHLDQQEKQPE), 314–328 (KHLEQQEGQPKHLEQ), and 341–360 (GQLKHLEQQEGQLEHLEHQE). The span at 361–383 (GQLGLPEQQVLQLKQLEKQQGQP) shows a compositional bias: low complexity. Residues 383–392 (PKHLEEEEGQ) form a 24; approximate repeat. The span at 384 to 393 (KHLEEEEGQL) shows a compositional bias: basic and acidic residues. Tandem repeats lie at residues 393–402 (LKHLVQQEGQ), 403–412 (LKHLVQQEGQ), 413–422 (LEQQERQVEH), 423–432 (LEQQVGQLKH), 433–442 (LEEQEGQLKH), 443–452 (LEQQQGQLEV), 453–462 (PEQQVGQPKN), 463–472 (LEQEEKQLEL), 473–482 (PEQQEGQVKH), 483–492 (LEKQEAQLEL), and 493–502 (PEQQVGQPKH). Basic and acidic residues-rich tracts occupy residues 415–424 (QQERQVEHLE) and 431–444 (KHLEEQEGQLKHLE). The span at 445-462 (QQQGQLEVPEQQVGQPKN) shows a compositional bias: low complexity. A compositionally biased stretch (basic and acidic residues) spans 479–488 (QVKHLEKQEA). An Isoglutamyl lysine isopeptide (Gln-Lys) (interchain with K-? in other proteins) cross-link involves residue Gln-496. Basic and acidic residues predominate over residues 501-535 (KHLEQQEKHLEHPEQQDGQLKHLEQQEGQLKDLEQ). Residues 503-512 (LEQQEKHLEH) form a 36; approximate repeat. 2 repeat units span residues 513–522 (PEQQDGQLKH) and 523–532 (LEQQEGQLKD). Residues 533–542 (LEQQKGQLEQ) form a 39; approximate repeat.

This sequence belongs to the involucrin family. In terms of assembly, directly or indirectly cross-linked to cornifelin (CNFN). In terms of processing, substrate of transglutaminase. Some glutamines and lysines are cross-linked to other involucrin molecules, to other proteins such as keratin, desmoplakin, periplakin and envoplakin, and to lipids like omega-hydroxyceramide. As to expression, keratinocytes of epidermis and other stratified squamous epithelia.

The protein localises to the cytoplasm. Part of the insoluble cornified cell envelope (CE) of stratified squamous epithelia. This is Involucrin (IVL) from Homo sapiens (Human).